Reading from the N-terminus, the 153-residue chain is 6,7-dimethyl-8-ribityllumazine synthase (153 aa).

5-amino-6-(D-ribitylamino)uracil-binding positions include Phe21, 55 to 57 (AFE), and 79 to 81 (CVI). Position 84 to 85 (84 to 85 (AT)) interacts with (2S)-2-hydroxy-3-oxobutyl phosphate. Catalysis depends on His87, which acts as the Proton donor. Phe112 lines the 5-amino-6-(D-ribitylamino)uracil pocket. Arg126 is a binding site for (2S)-2-hydroxy-3-oxobutyl phosphate.

This sequence belongs to the DMRL synthase family. As to quaternary structure, forms an icosahedral capsid composed of 60 subunits, arranged as a dodecamer of pentamers.

It carries out the reaction (2S)-2-hydroxy-3-oxobutyl phosphate + 5-amino-6-(D-ribitylamino)uracil = 6,7-dimethyl-8-(1-D-ribityl)lumazine + phosphate + 2 H2O + H(+). The protein operates within cofactor biosynthesis; riboflavin biosynthesis; riboflavin from 2-hydroxy-3-oxobutyl phosphate and 5-amino-6-(D-ribitylamino)uracil: step 1/2. Functionally, catalyzes the formation of 6,7-dimethyl-8-ribityllumazine by condensation of 5-amino-6-(D-ribitylamino)uracil with 3,4-dihydroxy-2-butanone 4-phosphate. This is the penultimate step in the biosynthesis of riboflavin. The chain is 6,7-dimethyl-8-ribityllumazine synthase from Staphylococcus epidermidis (strain ATCC 35984 / DSM 28319 / BCRC 17069 / CCUG 31568 / BM 3577 / RP62A).